The following is a 359-amino-acid chain: 5-amino-6-(D-ribitylamino)uracil--L-tyrosine 4-hydroxyphenyl transferase 1 (359 aa).

A Radical SAM core domain is found at 45–282 (VTYVVNANIN…VYAISRIFFK (238 aa)). The [4Fe-4S] cluster site is built by Cys-59, Cys-63, and Cys-66.

This sequence belongs to the radical SAM superfamily. CofH family. In terms of assembly, consists of two subunits, CofG and CofH. Requires [4Fe-4S] cluster as cofactor.

The catalysed reaction is 5-amino-6-(D-ribitylamino)uracil + L-tyrosine + S-adenosyl-L-methionine = 5-amino-5-(4-hydroxybenzyl)-6-(D-ribitylimino)-5,6-dihydrouracil + 2-iminoacetate + 5'-deoxyadenosine + L-methionine + H(+). It functions in the pathway cofactor biosynthesis; coenzyme F0 biosynthesis. In terms of biological role, catalyzes the radical-mediated synthesis of 5-amino-5-(4-hydroxybenzyl)-6-(D-ribitylimino)-5,6-dihydrouracil from 5-amino-6-(D-ribitylamino)uracil and L-tyrosine. In Methanococcus maripaludis (strain DSM 14266 / JCM 13030 / NBRC 101832 / S2 / LL), this protein is 5-amino-6-(D-ribitylamino)uracil--L-tyrosine 4-hydroxyphenyl transferase 1.